Reading from the N-terminus, the 276-residue chain is NADPH-dependent 7-cyano-7-deazaguanine reductase (276 aa).

83-85 (IES) is a binding site for substrate. 85-86 (SK) lines the NADPH pocket. Cys-184 (thioimide intermediate) is an active-site residue. The Proton donor role is filled by Asp-191. 223–224 (HE) serves as a coordination point for substrate. Residue 252-253 (RG) coordinates NADPH.

Belongs to the GTP cyclohydrolase I family. QueF type 2 subfamily. Homodimer.

It is found in the cytoplasm. It catalyses the reaction 7-aminomethyl-7-carbaguanine + 2 NADP(+) = 7-cyano-7-deazaguanine + 2 NADPH + 3 H(+). It participates in tRNA modification; tRNA-queuosine biosynthesis. Functionally, catalyzes the NADPH-dependent reduction of 7-cyano-7-deazaguanine (preQ0) to 7-aminomethyl-7-deazaguanine (preQ1). The polypeptide is NADPH-dependent 7-cyano-7-deazaguanine reductase (Pseudomonas aeruginosa (strain LESB58)).